Consider the following 330-residue polypeptide: 5'-AMP-activated protein kinase subunit gamma-1 (330 aa).

Residues 1–12 (MESVAAESAPAP) are compositionally biased toward low complexity. The interval 1–25 (MESVAAESAPAPENEHSQETPESNS) is disordered. CBS domains are found at residues 42-102 (PTSS…KSAL), 124-186 (SFKP…PKPE), and 197-259 (IGTY…NLDV). ADP is bound by residues Arg-69, 84 to 89 (MLTITD), Val-129, 150 to 151 (HR), and Lys-169. AMP-binding positions include Arg-69, 84-89 (MLTITD), Val-129, His-150, 150-151 (HR), Lys-169, Thr-199, Ala-204, 225-226 (SA), and 241-244 (SKFD). Residues Arg-69, 84–89 (MLTITD), Val-129, 150–151 (HR), Arg-151, and Lys-169 contribute to the ATP site. The AMPK pseudosubstrate motif lies at 137-158 (LFDAVSSLIRNKIHRLPVIDPE). Residue 241–244 (SKFD) participates in ADP binding. Position 241–244 (241–244 (SKFD)) interacts with ATP. Ser-260 carries the phosphoserine; by ULK1 modification. Thr-262 carries the post-translational modification Phosphothreonine; by ULK1. Arg-268 lines the ADP pocket. Arg-268 provides a ligand contact to AMP. An ATP-binding site is contributed by Arg-268. Ser-269 bears the Phosphoserine; by ULK1 mark. One can recognise a CBS 4 domain in the interval 271–328 (YFEGVLKCYLHETLEAIINRLVEAEVHRLVVVDEHDVVKGIVSLSDILQALVLTGGEK). ADP-binding positions include Leu-276 and 297 to 298 (HR). AMP is bound by residues Leu-276, His-297, 297-298 (HR), and 313-316 (SLSD). Residues Leu-276 and 297–298 (HR) contribute to the ATP site.

This sequence belongs to the 5'-AMP-activated protein kinase gamma subunit family. As to quaternary structure, AMPK is a heterotrimer of an alpha catalytic subunit (PRKAA1 or PRKAA2), a beta (PRKAB1 or PRKAB2) and a gamma non-catalytic subunits (PRKAG1, PRKAG2 or PRKAG3). Interacts with FNIP1 and FNIP2. Phosphorylated by ULK1 and ULK2; leading to negatively regulate AMPK activity and suggesting the existence of a regulatory feedback loop between ULK1, ULK2 and AMPK. There is some ambiguity for a phosphosite: Ser-260/Thr-262. Post-translationally, glycosylated; O-GlcNAcylated by OGT, promoting the AMP-activated protein kinase (AMPK) activity. As to expression, highly expressed in heart and brain, also found in kidney, white adipose tissue, lung and spleen.

Functionally, AMP/ATP-binding subunit of AMP-activated protein kinase (AMPK), an energy sensor protein kinase that plays a key role in regulating cellular energy metabolism. In response to reduction of intracellular ATP levels, AMPK activates energy-producing pathways and inhibits energy-consuming processes: inhibits protein, carbohydrate and lipid biosynthesis, as well as cell growth and proliferation. AMPK acts via direct phosphorylation of metabolic enzymes, and by longer-term effects via phosphorylation of transcription regulators. Also acts as a regulator of cellular polarity by remodeling the actin cytoskeleton; probably by indirectly activating myosin. Gamma non-catalytic subunit mediates binding to AMP, ADP and ATP, leading to activate or inhibit AMPK: AMP-binding results in allosteric activation of alpha catalytic subunit (PRKAA1 or PRKAA2) both by inducing phosphorylation and preventing dephosphorylation of catalytic subunits. ADP also stimulates phosphorylation, without stimulating already phosphorylated catalytic subunit. ATP promotes dephosphorylation of catalytic subunit, rendering the AMPK enzyme inactive. The protein is 5'-AMP-activated protein kinase subunit gamma-1 (Prkag1) of Rattus norvegicus (Rat).